Here is a 1062-residue protein sequence, read N- to C-terminus: Zinc finger protein swm (1062 aa).

In terms of domain architecture, PWI spans 7 to 75; sequence DKLKDWLSVV…ERLFDAIASE (69 aa). Disordered regions lie at residues 119–145 and 171–340; these read ADSP…QASQ and KPAF…PDRV. The span at 134-145 shows a compositional bias: polar residues; that stretch reads DSNQVKLEQASQ. Positions 172–182 are enriched in basic and acidic residues; the sequence is PAFDHKTKDSH. Residues 197-207 show a composition bias toward low complexity; sequence SASPPGRSSGV. The span at 208 to 220 shows a compositional bias: gly residues; that stretch reads SGSGGGGPGGAGL. Residues 234–249 show a composition bias toward basic residues; sequence SRRRRASLRSRSRSRS. Basic and acidic residues-rich tracts occupy residues 264 to 273 and 294 to 310; these read RRVNEREKTQ and RNFD…DRPR. Residues 322–340 are compositionally biased toward polar residues; it reads RSMSPERNARRNQNSPDRV. A C3H1-type zinc finger spans residues 363–391; it reads SHPRQRCRDFDEKGYCVRGETCPWDHGVN. The segment at 416–463 is disordered; the sequence is EIWARSGGPPPGAGQGPVPPPTQPGQTTINPFSGNVRPTTLMSGSGPS. Over residues 423-438 the composition is skewed to pro residues; that stretch reads GPPPGAGQGPVPPPTQ. A compositionally biased stretch (polar residues) spans 444–461; that stretch reads INPFSGNVRPTTLMSGSG. Positions 561–635 constitute an RRM domain; it reads SSLELRKVPR…RFIKVFWHND (75 aa). Disordered regions lie at residues 666-704, 716-741, 822-847, 886-920, and 1004-1062; these read NVPA…QANT, TTTA…LNPA, QDQL…KEQQ, SAAN…PTRV, and APVE…SWRR. The span at 721–733 shows a compositional bias: gly residues; the sequence is GSAGGAAGAGAPG. Positions 823-840 are enriched in low complexity; that stretch reads DQLQAQMQQQQQQQQPPV. A compositionally biased stretch (polar residues) spans 1018 to 1037; sequence SLENPKQLIQSVSESESLLG. The span at 1046–1056 shows a compositional bias: acidic residues; the sequence is LEDEEEDEESE.

The protein localises to the nucleus. Negatively regulates Hedgehog (hh) protein signal in wing development. Regulates neural-specific glycosylation by binding to FucTA mRNA and facilitating its nuclear export in neural cells. This Drosophila melanogaster (Fruit fly) protein is Zinc finger protein swm.